The sequence spans 214 residues: Large ribosomal subunit protein uL16 (214 aa).

Arg32 bears the Citrulline mark. Lys175 is covalently cross-linked (Glycyl lysine isopeptide (Lys-Gly) (interchain with G-Cter in SUMO2)). Lys188 participates in a covalent cross-link: Glycyl lysine isopeptide (Lys-Gly) (interchain with G-Cter in ubiquitin).

The protein belongs to the universal ribosomal protein uL16 family. In terms of assembly, component of the large ribosomal subunit. Mature ribosomes consist of a small (40S) and a large (60S) subunit. The 40S subunit contains about 33 different proteins and 1 molecule of RNA (18S). The 60S subunit contains about 49 different proteins and 3 molecules of RNA (28S, 5.8S and 5S). Citrullinated by PADI4. In terms of processing, ufmylated by UFL1.

It is found in the cytoplasm. Component of the large ribosomal subunit. Plays a role in the formation of actively translating ribosomes. May play a role in the embryonic brain development. The chain is Large ribosomal subunit protein uL16 (RPL10) from Oryctolagus cuniculus (Rabbit).